The primary structure comprises 79 residues: Hematopoietic cell signal transducer (79 aa).

Residues 1–18 form the signal peptide; the sequence is MAPPGHLLFLFLLPVAAS. Over 19 to 35 the chain is Extracellular; that stretch reads QTNEGSCSGCGPLSLPL. The chain crosses the membrane as a helical span at residues 36–56; sequence LAGLVAADAVMSLLIVGVVFV. Residues 57-79 lie on the Cytoplasmic side of the membrane; the sequence is CMRLHSRPAQEDGRVYINMPGRG. Tyrosine 72 bears the Phosphotyrosine mark. The GRB2 binding site stretch occupies residues 72–74; sequence YIN. Positions 72–75 are PIK3R1 binding site; that stretch reads YINM.

This sequence belongs to the DAP10 family. As to quaternary structure, homodimer; Disulfide-linked. Heterohexamer composed of four subunits of HCST/DAP10 and two subunits of KLRK1. Interacts (via transmembrane domain) with KLRK1 (via transmembrane domain); the interaction is required for KLRK1 NK cell surface and induces NK cell-mediated cytotoxicity. Interacts with PIK3R1 and GRB2. Interacts with CLEC5A. Forms an CLEC5A/TYROBP/HCST trimolecular complex depending almost solely on TYROBP. Interacts with CD300H. In terms of processing, phosphorylated; PIK3R1 and GRB2 associate specifically with tyrosine-phosphorylated HCST. Post-translationally, O-glycosylated.

The protein resides in the membrane. Functionally, transmembrane adapter protein which associates with KLRK1 to form an activation receptor KLRK1-HCST in lymphoid and myeloid cells; this receptor plays a major role in triggering cytotoxicity against target cells expressing cell surface ligands such as MHC class I chain-related MICA and MICB, and UL16-binding proteins (ULBPs); these ligands are up-regulated by stress conditions and pathological state such as viral infection and tumor transformation. Functions as a docking site for PI3-kinase PIK3R1 and GRB2. Interaction of ULBPs with KLRK1-HCST triggers calcium mobilization and activation of the PIK3R1, MAP2K/ERK, and JAK2/STAT5 signaling pathways. Both PIK3R1 and GRB2 are required for full KLRK1-HCST-mediated activation and ultimate killing of target cells. In NK cells, KLRK1-HCST signaling directly induces cytotoxicity and enhances cytokine production initiated via DAP12/TYROBP-associated receptors. In T-cells, it provides primarily costimulation for TCR-induced signals. KLRK1-HCST receptor plays a role in immune surveillance against tumors and is required for cytolysis of tumors cells; indeed, melanoma cells that do not express KLRK1 ligands escape from immune surveillance mediated by NK cells. This Rattus norvegicus (Rat) protein is Hematopoietic cell signal transducer (Hcst).